The primary structure comprises 102 residues: NAD(P)H-quinone oxidoreductase subunit 4L (102 aa).

3 helical membrane-spanning segments follow: residues 4–24 (LQFF…GLIV), 33–53 (MSIE…SNFV), and 65–85 (VFVI…VLGI).

The protein belongs to the complex I subunit 4L family. In terms of assembly, NDH-1 can be composed of about 15 different subunits; different subcomplexes with different compositions have been identified which probably have different functions.

It localises to the cellular thylakoid membrane. The enzyme catalyses a plastoquinone + NADH + (n+1) H(+)(in) = a plastoquinol + NAD(+) + n H(+)(out). It carries out the reaction a plastoquinone + NADPH + (n+1) H(+)(in) = a plastoquinol + NADP(+) + n H(+)(out). In terms of biological role, NDH-1 shuttles electrons from an unknown electron donor, via FMN and iron-sulfur (Fe-S) centers, to quinones in the respiratory and/or the photosynthetic chain. The immediate electron acceptor for the enzyme in this species is believed to be plastoquinone. Couples the redox reaction to proton translocation, and thus conserves the redox energy in a proton gradient. Cyanobacterial NDH-1 also plays a role in inorganic carbon-concentration. This chain is NAD(P)H-quinone oxidoreductase subunit 4L, found in Synechococcus sp. (strain JA-3-3Ab) (Cyanobacteria bacterium Yellowstone A-Prime).